The primary structure comprises 302 residues: m7GpppN-mRNA hydrolase NUDT17 (302 aa).

The 149-residue stretch at Gly-89 to Pro-237 folds into the Nudix hydrolase domain. Residues Gly-128–Gly-149 carry the Nudix box motif. Residues Glu-143 and Glu-147 each coordinate Mg(2+).

The protein belongs to the Nudix hydrolase family. Mg(2+) is required as a cofactor. Mn(2+) serves as cofactor.

It carries out the reaction a 5'-end (N(7)-methyl 5'-triphosphoguanosine)-ribonucleoside in mRNA + H2O = N(7)-methyl-GDP + a 5'-end phospho-ribonucleoside in mRNA + 2 H(+). In terms of biological role, acts as a decapping enzyme capable of hydrolyzing monomethylated capped RNAs (in vitro). Hydrolyzes monomethylated capped RNA after alpha and beta phosphates to form N(7)-methyl-GDP. Shows low activity towards unmethylated capped RNA. The sequence is that of m7GpppN-mRNA hydrolase NUDT17 (NUDT17) from Bos taurus (Bovine).